Consider the following 361-residue polypeptide: DNA replication and repair protein RecF (361 aa).

ATP is bound at residue 30 to 37 (GPNGSGKT).

This sequence belongs to the RecF family.

Its subcellular location is the cytoplasm. Its function is as follows. The RecF protein is involved in DNA metabolism; it is required for DNA replication and normal SOS inducibility. RecF binds preferentially to single-stranded, linear DNA. It also seems to bind ATP. The polypeptide is DNA replication and repair protein RecF (Yersinia enterocolitica serotype O:8 / biotype 1B (strain NCTC 13174 / 8081)).